We begin with the raw amino-acid sequence, 100 residues long: ESAT-6-like protein EsxB (100 aa).

The segment at glycine 80–isoleucine 100 is disordered.

The protein belongs to the WXG100 family. CFP-10 subfamily. In terms of assembly, forms a tight 1:1 complex with EsxA. An artificial EsxA-EsxB heterodimer interacts with EspA.

It is found in the secreted. In terms of biological role, an exported protein. Plays a role in DNA conjugation, in at least a donor strain. This Mycolicibacterium smegmatis (strain ATCC 700084 / mc(2)155) (Mycobacterium smegmatis) protein is ESAT-6-like protein EsxB.